A 663-amino-acid chain; its full sequence is Protein-arginine deiminase type-1 (663 aa).

Ca(2+) is bound by residues N153, D155, D157, D165, D176, D179, Q351, E353, K364, D371, S372, N375, F409, and L412. The active-site Nucleophile is C645.

This sequence belongs to the protein arginine deiminase family. As to quaternary structure, monomer. Requires Ca(2+) as cofactor. As to expression, detected in epidermal keratinocytes (at protein level). Epidermis, prostate, testis, placenta, spleen and thymus.

Its subcellular location is the cytoplasm. It catalyses the reaction L-arginyl-[protein] + H2O = L-citrullyl-[protein] + NH4(+). Catalyzes the deimination of arginine residues of proteins. This is Protein-arginine deiminase type-1 (PADI1) from Homo sapiens (Human).